The sequence spans 180 residues: Nucleoside triphosphate/diphosphate phosphatase (180 aa).

The active-site Proton donor is arginine 26. Mg(2+) is bound by residues asparagine 90, aspartate 106, aspartate 108, aspartate 110, aspartate 123, and glutamate 126.

This sequence belongs to the Ntdp family. The cofactor is Mg(2+).

It carries out the reaction a ribonucleoside 5'-triphosphate + H2O = a ribonucleoside 5'-diphosphate + phosphate + H(+). The enzyme catalyses a ribonucleoside 5'-diphosphate + H2O = a ribonucleoside 5'-phosphate + phosphate + H(+). Its function is as follows. Has nucleoside phosphatase activity towards nucleoside triphosphates and nucleoside diphosphates. The polypeptide is Nucleoside triphosphate/diphosphate phosphatase (Staphylococcus haemolyticus (strain JCSC1435)).